The primary structure comprises 138 residues: Centromere protein S (138 aa).

The residue at position 1 (M1) is an N-acetylmethionine. The segment at R110 to N138 is disordered.

It belongs to the TAF9 family. CENP-S/MHF1 subfamily. As to quaternary structure, heterodimer with CENPX, sometimes called MHF; this interaction stabilizes both partners. MHF heterodimers can assemble to form tetrameric structures. MHF also coassemble with CENPT-CENPW heterodimers at centromeres to form the tetrameric CENP-T-W-S-X complex. Forms a discrete complex with FANCM and CENPX, called FANCM-MHF; this interaction, probably mediated by direct binding between CENPS and FANCM, leads to synergistic activation of double-stranded DNA binding and strongly stimulates FANCM-mediated DNA remodeling. Recruited by FANCM to the Fanconi anemia (FA) core complex, which consists of CENPS, CENPX, FANCA, FANCB, FANCC, FANCE, FANCF, FANCG, FANCL, FANCM, FAAP24 and FAAP100. The FA core complex associates with Bloom syndrome (BLM) complex, which consists of at least BLM, DNA topoisomerase 3-alpha (TOP3A), RMI1/BLAP75, RPA1/RPA70 and RPA2/RPA32. The super complex between FA and BLM is called BRAFT. Component of the CENPA-CAD complex, composed of CENPI, CENPK, CENPL, CENPO, CENPP, CENPQ, CENPR and CENPS. The CENPA-CAD complex is probably recruited on centromeres by the CENPA-NAC complex, composed of at least CENPA, CENPC, CENPH, CENPM, CENPN, CENPT and CENPU. Ubiquitously expressed.

It is found in the nucleus. It localises to the chromosome. The protein localises to the centromere. Its subcellular location is the kinetochore. Functionally, DNA-binding component of the Fanconi anemia (FA) core complex. Required for the normal activation of the FA pathway, leading to monoubiquitination of the FANCI-FANCD2 complex in response to DNA damage, cellular resistance to DNA cross-linking drugs, and prevention of chromosomal breakage. In complex with CENPX (MHF heterodimer), crucial cofactor for FANCM in both binding and ATP-dependent remodeling of DNA. Stabilizes FANCM. In complex with CENPX and FANCM (but not other FANC proteins), rapidly recruited to blocked forks and promotes gene conversion at blocked replication forks. In complex with CENPT, CENPW and CENPX (CENP-T-W-S-X heterotetramer), involved in the formation of a functional kinetochore outer plate, which is essential for kinetochore-microtubule attachment and faithful mitotic progression. As a component of MHF and CENP-T-W-S-X complexes, binds DNA and bends it to form a nucleosome-like structure. DNA-binding function is fulfilled in the presence of CENPX, with the following preference for DNA substates: Holliday junction &gt; double-stranded &gt; splay arm &gt; single-stranded. Does not bind DNA on its own. In Homo sapiens (Human), this protein is Centromere protein S (CENPS).